We begin with the raw amino-acid sequence, 551 residues long: Urocanate hydratase (551 aa).

NAD(+) contacts are provided by residues 48-49, Gln126, 172-174, Glu192, Arg197, 238-239, 259-263, 269-270, and Tyr318; these read GG, GMG, NA, QTSAH, and YI. Cys406 is a catalytic residue. Gly488 serves as a coordination point for NAD(+).

This sequence belongs to the urocanase family. Requires NAD(+) as cofactor.

It localises to the cytoplasm. It catalyses the reaction 4-imidazolone-5-propanoate = trans-urocanate + H2O. Its pathway is amino-acid degradation; L-histidine degradation into L-glutamate; N-formimidoyl-L-glutamate from L-histidine: step 2/3. In terms of biological role, catalyzes the conversion of urocanate to 4-imidazolone-5-propionate. The polypeptide is Urocanate hydratase (Symbiobacterium thermophilum (strain DSM 24528 / JCM 14929 / IAM 14863 / T)).